The sequence spans 229 residues: Enolase-phosphatase E1 (229 aa).

It belongs to the HAD-like hydrolase superfamily. MasA/MtnC family. In terms of assembly, monomer. Requires Mg(2+) as cofactor.

The catalysed reaction is 5-methylsulfanyl-2,3-dioxopentyl phosphate + H2O = 1,2-dihydroxy-5-(methylsulfanyl)pent-1-en-3-one + phosphate. Its pathway is amino-acid biosynthesis; L-methionine biosynthesis via salvage pathway; L-methionine from S-methyl-5-thio-alpha-D-ribose 1-phosphate: step 3/6. It functions in the pathway amino-acid biosynthesis; L-methionine biosynthesis via salvage pathway; L-methionine from S-methyl-5-thio-alpha-D-ribose 1-phosphate: step 4/6. Bifunctional enzyme that catalyzes the enolization of 2,3-diketo-5-methylthiopentyl-1-phosphate (DK-MTP-1-P) into the intermediate 2-hydroxy-3-keto-5-methylthiopentenyl-1-phosphate (HK-MTPenyl-1-P), which is then dephosphorylated to form the acireductone 1,2-dihydroxy-3-keto-5-methylthiopentene (DHK-MTPene). The chain is Enolase-phosphatase E1 from Yersinia pestis (strain Pestoides F).